The primary structure comprises 614 residues: Threonine--tRNA ligase (614 aa).

Residues 1–141 form an editing domain region; the sequence is MRLLLIHSDY…LSKTIVPGEE (141 aa). The tract at residues 198–490 is catalytic; it reads AHVDLMRSKE…ISTQKVPALP (293 aa). 3 residues coordinate Zn(2+): Cys290, His342, and His463.

It belongs to the class-II aminoacyl-tRNA synthetase family. Homodimer. Requires Zn(2+) as cofactor.

Its subcellular location is the cytoplasm. It carries out the reaction tRNA(Thr) + L-threonine + ATP = L-threonyl-tRNA(Thr) + AMP + diphosphate + H(+). In terms of biological role, catalyzes the attachment of threonine to tRNA(Thr) in a two-step reaction: L-threonine is first activated by ATP to form Thr-AMP and then transferred to the acceptor end of tRNA(Thr). Also edits incorrectly charged L-seryl-tRNA(Thr). The chain is Threonine--tRNA ligase from Methanoregula boonei (strain DSM 21154 / JCM 14090 / 6A8).